The sequence spans 317 residues: MGEVQREKVAVIIGPTAVGKTKLSIDLAKALNGEIISGDSMQIYRTMDIGTAKVTKEEMDGIPHYMVDIKNPEESFSVAEFQERVRKHIREITERGKLPIIVGGTGLYIQSVLFDYQFTDDAGDAIYREQMEKLALERGVEYVHKKLQEVDPESAERIHANNVRRVIRALEIFHTTGEKMSDQLEKQENELLYDVSLIGLTMDREMLYDRINLRVDIMMDQGLLEEVEGLYNRGIRDCQSIQAIGYKEIYDYFEDRVSLEEAVSQLKTNSRRYAKRQLTWFRNKMDVTWFDVTDGEKTSEILRYIEGKLQLKSNNSK.

14–21 (GPTAVGKT) contributes to the ATP binding site. Substrate is bound at residue 16-21 (TAVGKT). Residues 39 to 42 (DSMQ) are interaction with substrate tRNA.

The protein belongs to the IPP transferase family. In terms of assembly, monomer. Mg(2+) serves as cofactor.

It catalyses the reaction adenosine(37) in tRNA + dimethylallyl diphosphate = N(6)-dimethylallyladenosine(37) in tRNA + diphosphate. Functionally, catalyzes the transfer of a dimethylallyl group onto the adenine at position 37 in tRNAs that read codons beginning with uridine, leading to the formation of N6-(dimethylallyl)adenosine (i(6)A). The sequence is that of tRNA dimethylallyltransferase from Bacillus cereus (strain Q1).